The sequence spans 281 residues: Pantothenate synthetase (281 aa).

An ATP-binding site is contributed by 26–33 (MGNLHDGH). Residue histidine 33 is the Proton donor of the active site. Glutamine 57 is a binding site for (R)-pantoate. Beta-alanine is bound at residue glutamine 57. 145–148 (GEKD) provides a ligand contact to ATP. Residue glutamine 151 coordinates (R)-pantoate. ATP is bound at residue 182–185 (MSSR).

Belongs to the pantothenate synthetase family. In terms of assembly, homodimer.

The protein localises to the cytoplasm. It carries out the reaction (R)-pantoate + beta-alanine + ATP = (R)-pantothenate + AMP + diphosphate + H(+). Its pathway is cofactor biosynthesis; (R)-pantothenate biosynthesis; (R)-pantothenate from (R)-pantoate and beta-alanine: step 1/1. Catalyzes the condensation of pantoate with beta-alanine in an ATP-dependent reaction via a pantoyl-adenylate intermediate. This Idiomarina loihiensis (strain ATCC BAA-735 / DSM 15497 / L2-TR) protein is Pantothenate synthetase.